A 396-amino-acid chain; its full sequence is Adenosine 3'-phospho 5'-phosphosulfate transporter 2 (396 aa).

The disordered stretch occupies residues 22–42 (NGGESAGNSPPSQRKSSTSES). Polar residues predominate over residues 27–42 (AGNSPPSQRKSSTSES). Residues Ser37 and Ser40 each carry the phosphoserine modification. N-linked (GlcNAc...) asparagine glycosylation occurs at Asn57. 10 helical membrane-spanning segments follow: residues 66 to 86 (CAGV…IFTV), 91 to 111 (PYGW…GLVE), 140 to 160 (LILA…LGYL), 163 to 183 (PTQV…SILI), 189 to 209 (GLLD…FTLA), 216 to 236 (NFNL…AAIG), 253 to 273 (VVFY…LVTG), 290 to 310 (FGYG…VLAL), 318 to 338 (IAAT…FVLF), and 342 to 362 (FTLQ…LNVY).

Belongs to the nucleotide-sugar transporter family. SLC35B subfamily.

Its subcellular location is the golgi apparatus membrane. Mediates the transport of adenosine 3'-phospho 5'-phosphosulfate (PAPS), from cytosol into Golgi. PAPS is a universal sulfuryl donor for sulfation events that take place in the Golgi. Essential for viability. Involved in glycosaminoglycan synthesis and the subsequent signaling. May be involved in hh and dpp signaling by controlling the sulfation of heparan sulfate (HS). The protein is Adenosine 3'-phospho 5'-phosphosulfate transporter 2 (Papst2) of Drosophila melanogaster (Fruit fly).